A 568-amino-acid polypeptide reads, in one-letter code: Cytosolic purine 5'-nucleotidase (568 aa).

Catalysis depends on D52, which acts as the Nucleophile. IMP contacts are provided by D52 and D54. The Mg(2+) site is built by D52 and D54. Catalysis depends on D54, which acts as the Proton donor. ATP contacts are provided by R144 and N154. Residues R202, D206, K215, T249, N250, S251, and K292 each coordinate IMP. A Mg(2+)-binding site is contributed by D351. The ATP site is built by Q453 and R456. The disordered stretch occupies residues I528 to E568. The interval H548 to E568 is required for tetramer assembly. The span at E550–E568 shows a compositional bias: acidic residues.

The protein belongs to the 5'(3')-deoxyribonucleotidase family. Homotetramer. Requires Mg(2+) as cofactor.

It is found in the cytoplasm. The protein localises to the cytosol. It carries out the reaction a ribonucleoside 5'-phosphate + H2O = a ribonucleoside + phosphate. The catalysed reaction is a 2'-deoxyribonucleoside + a ribonucleoside 5'-phosphate = a ribonucleoside + a 2'-deoxyribonucleoside 5'-phosphate. The enzyme catalyses IMP + H2O = inosine + phosphate. It catalyses the reaction GMP + H2O = guanosine + phosphate. It carries out the reaction dIMP + H2O = 2'-deoxyinosine + phosphate. The catalysed reaction is dGMP + H2O = 2'-deoxyguanosine + phosphate. The enzyme catalyses XMP + H2O = xanthosine + phosphate. It catalyses the reaction inosine + GMP = guanosine + IMP. It carries out the reaction dGMP + inosine = 2'-deoxyguanosine + IMP. The catalysed reaction is dIMP + inosine = 2'-deoxyinosine + IMP. The enzyme catalyses inosine + UMP = uridine + IMP. It catalyses the reaction inosine + CMP = cytidine + IMP. It carries out the reaction inosine + AMP = IMP + adenosine. Its activity is regulated as follows. Allosterically activated by various compounds including ATP, 2,3-BPG/2,3-Bisphosphoglyceric acid and Ap4A/P1,P4-bis(5'-adenosyl) tetraphosphate. Binding of an allosteric activator is a prerequisiste to magnesium and substrate binding. Inhibited by inorganic phosphate. In terms of biological role, broad specificity cytosolic 5'-nucleotidase that catalyzes the dephosphorylation of 6-hydroxypurine nucleoside 5'-monophosphates. In addition, possesses a phosphotransferase activity by which it can transfer a phosphate from a donor nucleoside monophosphate to an acceptor nucleoside, preferably inosine, deoxyinosine and guanosine. Has the highest activities for IMP and GMP followed by dIMP, dGMP and XMP. Could also catalyze the transfer of phosphates from pyrimidine monophosphates but with lower efficiency. Through these activities regulates the purine nucleoside/nucleotide pools within the cell. The chain is Cytosolic purine 5'-nucleotidase (nt5c2) from Xenopus tropicalis (Western clawed frog).